Here is a 142-residue protein sequence, read N- to C-terminus: Large ribosomal subunit protein uL11 (142 aa).

The protein belongs to the universal ribosomal protein uL11 family. In terms of assembly, part of the ribosomal stalk of the 50S ribosomal subunit. Interacts with L10 and the large rRNA to form the base of the stalk. L10 forms an elongated spine to which L12 dimers bind in a sequential fashion forming a multimeric L10(L12)X complex. Post-translationally, one or more lysine residues are methylated.

In terms of biological role, forms part of the ribosomal stalk which helps the ribosome interact with GTP-bound translation factors. In Haemophilus influenzae (strain 86-028NP), this protein is Large ribosomal subunit protein uL11.